The sequence spans 347 residues: Phenylalanine--tRNA ligase alpha subunit (347 aa).

A Mg(2+)-binding site is contributed by Glu-259.

Belongs to the class-II aminoacyl-tRNA synthetase family. Phe-tRNA synthetase alpha subunit type 1 subfamily. In terms of assembly, tetramer of two alpha and two beta subunits. Mg(2+) serves as cofactor.

The protein resides in the cytoplasm. It catalyses the reaction tRNA(Phe) + L-phenylalanine + ATP = L-phenylalanyl-tRNA(Phe) + AMP + diphosphate + H(+). The sequence is that of Phenylalanine--tRNA ligase alpha subunit from Oenococcus oeni (strain ATCC BAA-331 / PSU-1).